Here is a 187-residue protein sequence, read N- to C-terminus: Large ribosomal subunit protein uL5 (187 aa).

Belongs to the universal ribosomal protein uL5 family. In terms of assembly, part of the 50S ribosomal subunit; part of the 5S rRNA/L5/L18/L25 subcomplex. Contacts the 5S rRNA and the P site tRNA. Forms a bridge to the 30S subunit in the 70S ribosome.

In terms of biological role, this is one of the proteins that bind and probably mediate the attachment of the 5S RNA into the large ribosomal subunit, where it forms part of the central protuberance. In the 70S ribosome it contacts protein S13 of the 30S subunit (bridge B1b), connecting the 2 subunits; this bridge is implicated in subunit movement. Contacts the P site tRNA; the 5S rRNA and some of its associated proteins might help stabilize positioning of ribosome-bound tRNAs. The chain is Large ribosomal subunit protein uL5 from Mycolicibacterium smegmatis (strain ATCC 700084 / mc(2)155) (Mycobacterium smegmatis).